We begin with the raw amino-acid sequence, 117 residues long: Large ribosomal subunit protein bL20 (117 aa).

The protein belongs to the bacterial ribosomal protein bL20 family.

Binds directly to 23S ribosomal RNA and is necessary for the in vitro assembly process of the 50S ribosomal subunit. It is not involved in the protein synthesizing functions of that subunit. The sequence is that of Large ribosomal subunit protein bL20 from Natranaerobius thermophilus (strain ATCC BAA-1301 / DSM 18059 / JW/NM-WN-LF).